The chain runs to 766 residues: Probable beta-glucosidase K (766 aa).

N-linked (GlcNAc...) asparagine glycosylation is present at N19. D196 is an active-site residue. 3 N-linked (GlcNAc...) asparagine glycosylation sites follow: N288, N453, and N748. In terms of domain architecture, PA14 spans 369-528 (EGQPGLGMRF…DPERAIARAV (160 aa)). Residues 726–766 (LGRRGRSGSSPAVYRGRSNNVVNRTSHQGAQRISKGGFAAR) form a disordered region. Over residues 742-756 (RSNNVVNRTSHQGAQ) the composition is skewed to polar residues.

Belongs to the glycosyl hydrolase 3 family.

It localises to the secreted. The enzyme catalyses Hydrolysis of terminal, non-reducing beta-D-glucosyl residues with release of beta-D-glucose.. Its pathway is glycan metabolism; cellulose degradation. Beta-glucosidases are one of a number of cellulolytic enzymes involved in the degradation of cellulosic biomass. Catalyzes the last step releasing glucose from the inhibitory cellobiose. The protein is Probable beta-glucosidase K (bglK) of Aspergillus fumigatus (strain CBS 144.89 / FGSC A1163 / CEA10) (Neosartorya fumigata).